Consider the following 92-residue polypeptide: Probable acyl carrier protein (92 aa).

In terms of domain architecture, Carrier spans 11–92; the sequence is QVTFEELSAL…QVNATLRTAV (82 aa). S49 bears the O-(pantetheine 4'-phosphoryl)serine mark.

In terms of processing, 4'-phosphopantetheine is transferred from CoA to a specific serine of the apo-ACP-like protein.

Its function is as follows. Involved in developmentally regulated synthesis of a compound biosynthetically related to polyketide antibiotics which is essential for spore color in Streptomyces halstedii. The protein is Probable acyl carrier protein (sch3) of Streptomyces halstedii.